Here is a 353-residue protein sequence, read N- to C-terminus: Anthranilate phosphoribosyltransferase (353 aa).

Residues glycine 87, 90–91, threonine 95, 97–100, 115–123, and threonine 127 contribute to the 5-phospho-alpha-D-ribose 1-diphosphate site; these read GD, NIST, and KHGNRAASS. Position 87 (glycine 87) interacts with anthranilate. Serine 99 lines the Mg(2+) pocket. An anthranilate-binding site is contributed by asparagine 118. Arginine 173 is a binding site for anthranilate. Positions 231 and 232 each coordinate Mg(2+).

The protein belongs to the anthranilate phosphoribosyltransferase family. As to quaternary structure, homodimer. The cofactor is Mg(2+).

The enzyme catalyses N-(5-phospho-beta-D-ribosyl)anthranilate + diphosphate = 5-phospho-alpha-D-ribose 1-diphosphate + anthranilate. The protein operates within amino-acid biosynthesis; L-tryptophan biosynthesis; L-tryptophan from chorismate: step 2/5. Functionally, catalyzes the transfer of the phosphoribosyl group of 5-phosphorylribose-1-pyrophosphate (PRPP) to anthranilate to yield N-(5'-phosphoribosyl)-anthranilate (PRA). The protein is Anthranilate phosphoribosyltransferase of Salinispora arenicola (strain CNS-205).